Here is a 354-residue protein sequence, read N- to C-terminus: Phospho-N-acetylmuramoyl-pentapeptide-transferase (354 aa).

Helical transmembrane passes span 27–47 (ATLL…INML), 73–93 (TMGG…WMDV), 97–117 (LVWA…LDDY), 138–158 (FVVA…YVPV), 162–182 (LYVP…VGAG), 193–213 (GLAI…AYLA), 230–250 (AGEL…FLWF), 256–276 (AVFM…VIAV), 282–302 (IVLA…IVQV), and 331–351 (TVVI…LATL).

The protein belongs to the glycosyltransferase 4 family. MraY subfamily. It depends on Mg(2+) as a cofactor.

Its subcellular location is the cell inner membrane. The catalysed reaction is UDP-N-acetyl-alpha-D-muramoyl-L-alanyl-gamma-D-glutamyl-meso-2,6-diaminopimeloyl-D-alanyl-D-alanine + di-trans,octa-cis-undecaprenyl phosphate = di-trans,octa-cis-undecaprenyl diphospho-N-acetyl-alpha-D-muramoyl-L-alanyl-D-glutamyl-meso-2,6-diaminopimeloyl-D-alanyl-D-alanine + UMP. It participates in cell wall biogenesis; peptidoglycan biosynthesis. In terms of biological role, catalyzes the initial step of the lipid cycle reactions in the biosynthesis of the cell wall peptidoglycan: transfers peptidoglycan precursor phospho-MurNAc-pentapeptide from UDP-MurNAc-pentapeptide onto the lipid carrier undecaprenyl phosphate, yielding undecaprenyl-pyrophosphoryl-MurNAc-pentapeptide, known as lipid I. The polypeptide is Phospho-N-acetylmuramoyl-pentapeptide-transferase (Novosphingobium aromaticivorans (strain ATCC 700278 / DSM 12444 / CCUG 56034 / CIP 105152 / NBRC 16084 / F199)).